Reading from the N-terminus, the 702-residue chain is Elongation factor G 2 (702 aa).

The region spanning 8 to 290 (ERYRNIGISA…AVIDYLPSPV (283 aa)) is the tr-type G domain. GTP contacts are provided by residues 17–24 (AHIDAGKT), 88–92 (DTPGH), and 142–145 (NKMD).

It belongs to the TRAFAC class translation factor GTPase superfamily. Classic translation factor GTPase family. EF-G/EF-2 subfamily.

The protein localises to the cytoplasm. Functionally, catalyzes the GTP-dependent ribosomal translocation step during translation elongation. During this step, the ribosome changes from the pre-translocational (PRE) to the post-translocational (POST) state as the newly formed A-site-bound peptidyl-tRNA and P-site-bound deacylated tRNA move to the P and E sites, respectively. Catalyzes the coordinated movement of the two tRNA molecules, the mRNA and conformational changes in the ribosome. In Cupriavidus metallidurans (strain ATCC 43123 / DSM 2839 / NBRC 102507 / CH34) (Ralstonia metallidurans), this protein is Elongation factor G 2.